We begin with the raw amino-acid sequence, 361 residues long: uncharacterized protein (361 aa).

An N-terminal signal peptide occupies residues 1 to 17; that stretch reads MNLFIYVLLLSIWTSSC. Topologically, residues 18–47 are extracellular; sequence LDRNESNGSATAVTTHAEFKQTKLQELRRR. Residue asparagine 24 is glycosylated (N-linked (GlcNAc...) asparagine). A helical membrane pass occupies residues 48 to 68; the sequence is LLIIVIGTLITGYMVSCTCLL. At 69–361 the chain is on the cytoplasmic side; the sequence is HYSCDSEEAH…EDIYKNSRNN (293 aa). The segment covering 95–106 has biased composition (polar residues); it reads SSKISFTDSKSP. The disordered stretch occupies residues 95-197; it reads SSKISFTDSK…SQVSPSYPEK (103 aa). Over residues 144–158 the composition is skewed to low complexity; it reads PSSQKKPSKPSAPKK. The segment covering 169-185 has biased composition (basic residues); the sequence is HRTRSPKKAHRQAHAHK.

It is found in the membrane. This is an uncharacterized protein from Bos taurus (Bovine).